The primary structure comprises 695 residues: DNA ligase (695 aa).

NAD(+) contacts are provided by residues 39-43, 88-89, and Glu124; these read DAEYD and SL. Lys126 functions as the N6-AMP-lysine intermediate in the catalytic mechanism. 4 residues coordinate NAD(+): Arg147, Glu183, Lys299, and Lys323. Zn(2+) contacts are provided by Cys419, Cys422, Cys437, and Cys443. The 84-residue stretch at 612 to 695 folds into the BRCT domain; that stretch reads PAQGHLSGKT…ELAGIGPVGP (84 aa).

Belongs to the NAD-dependent DNA ligase family. LigA subfamily. Requires Mg(2+) as cofactor. It depends on Mn(2+) as a cofactor.

It carries out the reaction NAD(+) + (deoxyribonucleotide)n-3'-hydroxyl + 5'-phospho-(deoxyribonucleotide)m = (deoxyribonucleotide)n+m + AMP + beta-nicotinamide D-nucleotide.. DNA ligase that catalyzes the formation of phosphodiester linkages between 5'-phosphoryl and 3'-hydroxyl groups in double-stranded DNA using NAD as a coenzyme and as the energy source for the reaction. It is essential for DNA replication and repair of damaged DNA. This chain is DNA ligase, found in Gluconacetobacter diazotrophicus (strain ATCC 49037 / DSM 5601 / CCUG 37298 / CIP 103539 / LMG 7603 / PAl5).